The chain runs to 334 residues: Inositol 2-dehydrogenase (334 aa).

Belongs to the Gfo/Idh/MocA family. Homotetramer.

It catalyses the reaction myo-inositol + NAD(+) = scyllo-inosose + NADH + H(+). Involved in the oxidation of myo-inositol (MI) to 2-keto-myo-inositol (2KMI or 2-inosose). This is Inositol 2-dehydrogenase from Cereibacter sphaeroides (strain ATCC 17029 / ATH 2.4.9) (Rhodobacter sphaeroides).